A 357-amino-acid chain; its full sequence is DNA replication and repair protein RecF (357 aa).

Position 30–37 (30–37 (GANGSGKT)) interacts with ATP.

Belongs to the RecF family.

Its subcellular location is the cytoplasm. Functionally, the RecF protein is involved in DNA metabolism; it is required for DNA replication and normal SOS inducibility. RecF binds preferentially to single-stranded, linear DNA. It also seems to bind ATP. In Escherichia coli O6:K15:H31 (strain 536 / UPEC), this protein is DNA replication and repair protein RecF.